The sequence spans 97 residues: MSSISRDEVAHLARLSRLSLTDDELDEFADQIDGIIEHVQKVSNVDTEGVEPMSHPSDLAGVMREDEVHPTLTAEQALDQAPASQRDRFEVPRILGE.

Residues 74 to 97 form a disordered region; the sequence is AEQALDQAPASQRDRFEVPRILGE. Basic and acidic residues predominate over residues 85-97; sequence QRDRFEVPRILGE.

The protein belongs to the GatC family. In terms of assembly, heterotrimer of A, B and C subunits.

It carries out the reaction L-glutamyl-tRNA(Gln) + L-glutamine + ATP + H2O = L-glutaminyl-tRNA(Gln) + L-glutamate + ADP + phosphate + H(+). It catalyses the reaction L-aspartyl-tRNA(Asn) + L-glutamine + ATP + H2O = L-asparaginyl-tRNA(Asn) + L-glutamate + ADP + phosphate + 2 H(+). In terms of biological role, allows the formation of correctly charged Asn-tRNA(Asn) or Gln-tRNA(Gln) through the transamidation of misacylated Asp-tRNA(Asn) or Glu-tRNA(Gln) in organisms which lack either or both of asparaginyl-tRNA or glutaminyl-tRNA synthetases. The reaction takes place in the presence of glutamine and ATP through an activated phospho-Asp-tRNA(Asn) or phospho-Glu-tRNA(Gln). The chain is Aspartyl/glutamyl-tRNA(Asn/Gln) amidotransferase subunit C from Corynebacterium kroppenstedtii (strain DSM 44385 / JCM 11950 / CIP 105744 / CCUG 35717).